The chain runs to 33 residues: Photosystem II reaction center protein T (33 aa).

Residues 3 to 23 (ALVYTFLLVSTLGIIFFAIFF) traverse the membrane as a helical segment.

The protein belongs to the PsbT family. In terms of assembly, PSII is composed of 1 copy each of membrane proteins PsbA, PsbB, PsbC, PsbD, PsbE, PsbF, PsbH, PsbI, PsbJ, PsbK, PsbL, PsbM, PsbT, PsbY, PsbZ, Psb30/Ycf12, at least 3 peripheral proteins of the oxygen-evolving complex and a large number of cofactors. It forms dimeric complexes.

It localises to the plastid. It is found in the chloroplast thylakoid membrane. Its function is as follows. Found at the monomer-monomer interface of the photosystem II (PS II) dimer, plays a role in assembly and dimerization of PSII. PSII is a light-driven water plastoquinone oxidoreductase, using light energy to abstract electrons from H(2)O, generating a proton gradient subsequently used for ATP formation. The protein is Photosystem II reaction center protein T of Asparagus officinalis (Garden asparagus).